Here is a 478-residue protein sequence, read N- to C-terminus: Proline--tRNA ligase (478 aa).

It belongs to the class-II aminoacyl-tRNA synthetase family. ProS type 3 subfamily. In terms of assembly, homodimer.

The protein resides in the cytoplasm. It carries out the reaction tRNA(Pro) + L-proline + ATP = L-prolyl-tRNA(Pro) + AMP + diphosphate. Its function is as follows. Catalyzes the attachment of proline to tRNA(Pro) in a two-step reaction: proline is first activated by ATP to form Pro-AMP and then transferred to the acceptor end of tRNA(Pro). This is Proline--tRNA ligase from Methanothrix thermoacetophila (strain DSM 6194 / JCM 14653 / NBRC 101360 / PT) (Methanosaeta thermophila).